Here is a 142-residue protein sequence, read N- to C-terminus: MAKEFSRTRRIAQQLQQELAQVLQRDMKDPRIGFVTVNDVDVSRDLSYAKVYVTFFEEDEKLVEQKVAALDAAAGYIRSLVAGRMKLRVMPELRFIYDSSLVEGMRMSNLVSRVISNDEAKQKQHGVETDAEQGDTKEEGDK.

The interval 119–142 (EAKQKQHGVETDAEQGDTKEEGDK) is disordered.

It belongs to the RbfA family. In terms of assembly, monomer. Binds 30S ribosomal subunits, but not 50S ribosomal subunits or 70S ribosomes.

The protein resides in the cytoplasm. In terms of biological role, one of several proteins that assist in the late maturation steps of the functional core of the 30S ribosomal subunit. Associates with free 30S ribosomal subunits (but not with 30S subunits that are part of 70S ribosomes or polysomes). Required for efficient processing of 16S rRNA. May interact with the 5'-terminal helix region of 16S rRNA. The protein is Ribosome-binding factor A of Shewanella pealeana (strain ATCC 700345 / ANG-SQ1).